A 587-amino-acid polypeptide reads, in one-letter code: Kelch-like protein 3 (587 aa).

Position 10 is a phosphoserine (Ser-10). The BTB domain occupies 50 to 117 (CDVMIVAEDV…IYTAEIEVTE (68 aa)). The BACK domain maps to 152-254 (CLGIRAFADV…PRDYLVQTVE (103 aa)). Thr-295 bears the Phosphothreonine mark. Kelch repeat units follow at residues 302-347 (VMIV…FMAG), 348-394 (HVYA…VLND), 396-441 (LYAV…VVEG), 442-490 (KLYA…VLSG), 491-537 (QLYA…AVNG), and 539-585 (LYVV…VIHK). Position 375 is a phosphothreonine (Thr-375). Phosphoserine is present on Ser-376. Ser-433 carries the post-translational modification Phosphoserine; by PKA and PKC.

Belongs to the KLHL3 family. Homodimer. Component of the BCR(KLHL3) E3 ubiquitin ligase complex, at least composed of CUL3 and KLHL3 and RBX1. Interacts with CLDN8. Phosphorylation at Ser-433 by PKA or PKC decreases the interaction with WNK1 and WNK4, leading to inhibit their degradation by the BCR(KLHL3) complex. Phosphorylated at Ser-433 by PKC in response to angiotensin II signaling, decreasing ability to promote degradation of WNK1 and WNK4, leading to activation of Na-Cl cotransporter SLC12A3/NCC. Phosphorylation at Ser-433 is increased by insulin. Dephosphorylated at Ser-433 by calcineurin PPP3CA, promoting degradation of WNK1 and WNK4. In terms of tissue distribution, widely expressed.

Its subcellular location is the cytoplasm. The protein resides in the cytosol. It localises to the cytoskeleton. Its pathway is protein modification; protein ubiquitination. In terms of biological role, substrate-specific adapter of a BCR (BTB-CUL3-RBX1) E3 ubiquitin ligase complex that acts as a regulator of ion transport in the distal nephron. The BCR(KLHL3) complex acts by mediating ubiquitination and degradation of WNK1 and WNK4, two activators of Na-Cl cotransporter SLC12A3/NCC in distal convoluted tubule cells of kidney, thereby regulating NaCl reabsorption. The BCR(KLHL3) complex also mediates ubiquitination and degradation of WNK3. The BCR(KLHL3) complex also mediates ubiquitination of CLDN8, a tight-junction protein required for paracellular chloride transport in the kidney, leading to its degradation. This Homo sapiens (Human) protein is Kelch-like protein 3.